We begin with the raw amino-acid sequence, 548 residues long: Folylpolyglutamate synthase (548 aa).

An ATP-binding site is contributed by 130-133 (GKGS). Mg(2+)-binding residues include serine 157, glutamate 234, and histidine 262. Residues arginine 382 and aspartate 396 each coordinate ATP.

The protein belongs to the folylpolyglutamate synthase family. A monovalent cation serves as cofactor.

It is found in the mitochondrion inner membrane. The protein resides in the mitochondrion matrix. Its subcellular location is the cytoplasm. It carries out the reaction (6S)-5,6,7,8-tetrahydrofolyl-(gamma-L-Glu)(n) + L-glutamate + ATP = (6S)-5,6,7,8-tetrahydrofolyl-(gamma-L-Glu)(n+1) + ADP + phosphate + H(+). It participates in cofactor biosynthesis; tetrahydrofolylpolyglutamate biosynthesis. Functionally, catalyzes conversion of folates to polyglutamate derivatives allowing concentration of folate compounds in the cell and the intracellular retention of these cofactors, which are important substrates for most of the folate-dependent enzymes that are involved in one-carbon transfer reactions involved in purine, pyrimidine and amino acid synthesis. Required for methionine synthesis and maintenance of intact mitochondrial DNA. Involved in telomere maintenance. This chain is Folylpolyglutamate synthase, found in Saccharomyces cerevisiae (strain FostersB) (Baker's yeast).